The primary structure comprises 417 residues: MFADLGYDIEEDKLGIPTVPGKVTLQKDAQNLIGISIGGGAQYCPCLYIVQVFDNTPAALDGTVAAGDEITGVNGRSIKGKTKVEVAKMIQEVKGEVTIHYNKLQADPKQGMSLDIVLKKVKHRLVENMSSGTADALGLSRAILCNDGLVKRLEELERTAELYKGMTEHTKNLLRAFYELSQTHRAFGDVFSVIGVREPQPAASEAFVKFADAHRSIEKFGIRLLKTIKPMLTDLNTYLNKAIPDTRLTIKKYLDVKFEYLSYCLKVKEMDDEEYSCIALGEPLYRVSTGNYEYRLILRCRQEARARFSQMRKDVLEKMELLDQEHVQDIVLQLQRFVSTMSKYYNDCYSVLRDADVFPIEVDLAHTTLAYGLSQDEFTDGEDEEDEDEEDTAAGEPPRDSRGAAGPLDKGGSWCNS.

A PDZ domain is found at 22 to 105 (KVTLQKDAQN…EVTIHYNKLQ (84 aa)). Zn(2+) is bound by residues C44 and C46. T82 bears the Phosphothreonine mark. In terms of domain architecture, AH spans 144 to 357 (LCNDGLVKRL…CYSVLRDADV (214 aa)). The interval 375-417 (QDEFTDGEDEEDEDEEDTAAGEPPRDSRGAAGPLDKGGSWCNS) is disordered. Residues 377 to 393 (EFTDGEDEEDEDEEDTA) are compositionally biased toward acidic residues. Residue C415 is the site of S-palmitoyl cysteine; by DHHC8 attachment.

In terms of assembly, monomer and homodimer. Interacts with CXADR. Interacts presynaptically with the glutamate receptors GRIA2, GRIA3, GRIK3, isoform 3 of GRIA4, isoform A of GRM4, GRM7 and GRM8; with NAPA and NAPB; and with BTG2. The interaction with NAPA and NAPB disrupts the interaction with GRIA2, conducting to the internalization of GRIA2. Interacts with PRKCA; with the amine transporters SLC6A2 and SLC6A3; with the channels ASIC1 and ASIC2; with the GTP-binding proteins ARF1 and ARF3; with the ephrin receptor tyrosine kinases EPHA7, EPHB1 and EPHB2; with ERBB2 and through its PDZ domain with the C-terminal tail of PRLHR. Interacts with UNC5A. Interacts (via AH domain) with NCS1/FREQ; in a calcium-dependent manner. Interacts with F-actin and associates with the ARP2/3 complex. Interacts (via PDZ domain) with ARF1 (activated); the interaction blocks Arp2/3 complex inhibition. Interacts with SORCS3. Phosphorylation at Thr-82 appears to inhibit the interaction with AMPA receptors. In terms of processing, palmitoylation on Cys-415 is essential for long-term synaptic depression (LTD).

It is found in the cytoplasm. The protein resides in the perinuclear region. The protein localises to the membrane. It localises to the postsynaptic density. Its subcellular location is the synapse. It is found in the synaptosome. The protein resides in the cytoskeleton. In terms of biological role, probable adapter protein that bind to and organize the subcellular localization of a variety of membrane proteins containing some PDZ recognition sequence. Involved in the clustering of various receptors, possibly by acting at the receptor internalization level. Plays a role in synaptic plasticity by regulating the trafficking and internalization of AMPA receptors. May be regulated upon PRKCA activation. May regulate ASIC1/ASIC3 channel. Regulates actin polymerization by inhibiting the actin-nucleating activity of the Arp2/3 complex; the function is competitive with nucleation promoting factors and is linked to neuronal morphology regulation and AMPA receptor (AMPAR) endocytosis. Via interaction with the Arp2/3 complex involved in regulation of synaptic plasicity of excitatory synapses and required for spine shrinkage during long-term depression (LTD). Involved in regulation of astrocyte morphology, antagonistic to Arp2/3 complex activator WASL/N-WASP function. This chain is PRKCA-binding protein (PICK1), found in Bos taurus (Bovine).